The chain runs to 421 residues: Extracellular signal-regulated kinase 1 (421 aa).

Residues 70-375 enclose the Protein kinase domain; sequence YQILEIVGEG…VEDALKHPYL (306 aa). ATP-binding positions include 76–84 and lysine 99; that span reads VGEGAYGIV. Aspartate 194 (proton acceptor) is an active-site residue. At threonine 230 the chain carries Phosphothreonine. Residues 230 to 232 carry the TXY motif; that stretch reads TEY. A Phosphotyrosine modification is found at tyrosine 232.

The protein belongs to the protein kinase superfamily. CMGC Ser/Thr protein kinase family. MAP kinase subfamily. Requires Mg(2+) as cofactor. Dually phosphorylated on Thr-230 and Tyr-232, which activates the enzyme.

The catalysed reaction is L-seryl-[protein] + ATP = O-phospho-L-seryl-[protein] + ADP + H(+). The enzyme catalyses L-threonyl-[protein] + ATP = O-phospho-L-threonyl-[protein] + ADP + H(+). Activated by tyrosine and threonine phosphorylation. The protein is Extracellular signal-regulated kinase 1 (CEK1) of Candida albicans (strain SC5314 / ATCC MYA-2876) (Yeast).